A 217-amino-acid chain; its full sequence is Large ribosomal subunit protein uL3 (217 aa).

The segment at Ser-129–Met-161 is disordered. Over residues Ala-142–Gly-153 the composition is skewed to low complexity.

Belongs to the universal ribosomal protein uL3 family. Part of the 50S ribosomal subunit. Forms a cluster with proteins L14 and L19.

Its function is as follows. One of the primary rRNA binding proteins, it binds directly near the 3'-end of the 23S rRNA, where it nucleates assembly of the 50S subunit. This chain is Large ribosomal subunit protein uL3, found in Prochlorococcus marinus subsp. pastoris (strain CCMP1986 / NIES-2087 / MED4).